A 237-amino-acid polypeptide reads, in one-letter code: Uridylate kinase (237 aa).

Residue 9–12 participates in ATP binding; it reads KLSG. G51 is a UMP binding site. ATP is bound by residues G52 and R56. Residues D71 and 132–139 contribute to the UMP site; that span reads CGNPFFTT. Residues T159, Y165, and D168 each contribute to the ATP site.

This sequence belongs to the UMP kinase family. Homohexamer.

It is found in the cytoplasm. It catalyses the reaction UMP + ATP = UDP + ADP. It participates in pyrimidine metabolism; CTP biosynthesis via de novo pathway; UDP from UMP (UMPK route): step 1/1. Its activity is regulated as follows. Inhibited by UTP. Its function is as follows. Catalyzes the reversible phosphorylation of UMP to UDP. This Prochlorococcus marinus (strain SARG / CCMP1375 / SS120) protein is Uridylate kinase.